Consider the following 273-residue polypeptide: HLA class II histocompatibility antigen, DO beta chain (273 aa).

Residues methionine 1 to glycine 26 form the signal peptide. Residues threonine 27–lysine 120 form a beta-1 region. Topologically, residues threonine 27–lysine 224 are extracellular. 2 disulfide bridges follow: cysteine 41-cysteine 105 and cysteine 143-cysteine 199. N-linked (GlcNAc...) asparagine glycosylation occurs at asparagine 45. The segment at valine 121–tryptophan 214 is beta-2. The Ig-like C1-type domain maps to proline 123 to glutamate 213. Positions arginine 215–lysine 224 are connecting peptide. The helical transmembrane segment at methionine 225–isoleucine 245 threads the bilayer. Residues glutamine 246 to cysteine 273 are Cytoplasmic-facing.

This sequence belongs to the MHC class II family. As to quaternary structure, heterodimer of an alpha chain (DOA) and a beta chain (DOB). Forms a heterotetrameric complex with an HLA-DM molecule during intracellular transport in endosomal/lysosomal compartments in B-cells.

It localises to the endosome membrane. It is found in the lysosome membrane. Its function is as follows. Important modulator in the HLA class II restricted antigen presentation pathway by interaction with the HLA-DM molecule in B-cells. Modifies peptide exchange activity of HLA-DM. The protein is HLA class II histocompatibility antigen, DO beta chain (HLA-DOB) of Homo sapiens (Human).